A 138-amino-acid polypeptide reads, in one-letter code: Cystatin-11 (138 aa).

A signal peptide spans 1–26 (MMAEPWQALQLLLAILLTLMALPYQA). Intrachain disulfides connect Cys94-Cys102 and Cys115-Cys135. Asn132 carries an N-linked (GlcNAc...) asparagine glycan.

The protein belongs to the cystatin family. As to expression, detected in the epithelium and lumen of the epididymis, and in sperm (at protein level).

The protein localises to the secreted. Has antibacterial activity against the Gram-negative bacteria E.coli. May play a role in sperm maturation and fertilization. In Homo sapiens (Human), this protein is Cystatin-11 (CST11).